The following is a 496-amino-acid chain: Tyrosine-protein kinase Srms (496 aa).

Residues 55-116 (PRARLFRALY…PVTYLAKATP (62 aa)) enclose the SH3 domain. Positions 124–216 (WYFSGISRAQ…LIQNPLLQPC (93 aa)) constitute an SH2 domain. Residues 234 to 495 (FVLRRKLGEG…AINRRLHLGL (262 aa)) form the Protein kinase domain. Residues 240 to 248 (LGEGFFGEV) and K262 contribute to the ATP site. D354 functions as the Proton acceptor in the catalytic mechanism. Y384 carries the post-translational modification Phosphotyrosine; by autocatalysis.

Belongs to the protein kinase superfamily. Tyr protein kinase family. SRC subfamily. As to quaternary structure, interacts (via the SH2 and SH3 domains) with DOK1. Interacts with KHDRBS1/SAM68 and VIM. Higher expression in liver, lung, thymus and skin than in brain, kidney, heart and spleen. In skin, highly expressed in keratinocytes. Abundant in lung, liver, spleen, kidney and testis and is also detected in the cerebrum.

The protein resides in the cytoplasm. The catalysed reaction is L-tyrosyl-[protein] + ATP = O-phospho-L-tyrosyl-[protein] + ADP + H(+). Its function is as follows. Non-receptor tyrosine-protein kinase which phosphorylates DOK1 on tyrosine residues. Also phosphorylates KHDRBS1/SAM68 and VIM on tyrosine residues. Phosphorylation of KHDRBS1 is EGF-dependent. Phosphorylates OTUB1, promoting deubiquitination of RPTOR. This chain is Tyrosine-protein kinase Srms (Srms), found in Mus musculus (Mouse).